A 300-amino-acid chain; its full sequence is Large ribosomal subunit protein uL18 (300 aa).

Basic and acidic residues predominate over residues 246 to 267 (NIRSDPKRDRKPKKDVSKEPKR). Residues 246–276 (NIRSDPKRDRKPKKDVSKEPKRWNAKKLTNA) form a disordered region.

It belongs to the universal ribosomal protein uL18 family. As to quaternary structure, component of the large ribosomal subunit (LSU).

The protein localises to the cytoplasm. The protein resides in the nucleus. Functionally, component of the ribosome, a large ribonucleoprotein complex responsible for the synthesis of proteins in the cell. The small ribosomal subunit (SSU) binds messenger RNAs (mRNAs) and translates the encoded message by selecting cognate aminoacyl-transfer RNA (tRNA) molecules. The large subunit (LSU) contains the ribosomal catalytic site termed the peptidyl transferase center (PTC), which catalyzes the formation of peptide bonds, thereby polymerizing the amino acids delivered by tRNAs into a polypeptide chain. The nascent polypeptides leave the ribosome through a tunnel in the LSU and interact with protein factors that function in enzymatic processing, targeting, and the membrane insertion of nascent chains at the exit of the ribosomal tunnel. The chain is Large ribosomal subunit protein uL18 (RpL5) from Toxoptera citricida (Brown citrus aphid).